The primary structure comprises 239 residues: Fibroblast growth factor 3 (239 aa).

The N-terminal stretch at 1–17 (MGLIWLLLLSLLEPGWP) is a signal peptide. N-linked (GlcNAc...) asparagine glycosylation is present at Asn-65. A disordered region spans residues 193-239 (QLQSGLPRPPGKGVQPRRRRQKQSPDNLEPSHVQASRLGSQLEASAH). Residues 225-239 (VQASRLGSQLEASAH) are compositionally biased toward polar residues.

It belongs to the heparin-binding growth factors family. Interacts with FGFR1 and FGFR2. Affinity between fibroblast growth factors (FGFs) and their receptors is increased by heparan sulfate glycosaminoglycans that function as coreceptors.

It localises to the secreted. Its function is as follows. Plays an important role in the regulation of embryonic development, cell proliferation, and cell differentiation. Required for normal ear development. This Homo sapiens (Human) protein is Fibroblast growth factor 3 (FGF3).